Consider the following 103-residue polypeptide: Cell division protein FtsB (103 aa).

Residues 1-3 (MGK) lie on the Cytoplasmic side of the membrane. Residues 4 to 21 (LTLLLLAILVWLQYSLWF) form a helical membrane-spanning segment. The Periplasmic portion of the chain corresponds to 22 to 103 (GKNGIHDYTR…RAQSAGQNNR (82 aa)). A coiled-coil region spans residues 28–71 (DYTRVNDDVAALQATNAKLKARNDQLFAEIDDLNGGQEALEERA).

The protein belongs to the FtsB family. Part of a complex composed of FtsB, FtsL and FtsQ.

Its subcellular location is the cell inner membrane. Its function is as follows. Essential cell division protein. May link together the upstream cell division proteins, which are predominantly cytoplasmic, with the downstream cell division proteins, which are predominantly periplasmic. This Shigella flexneri serotype 5b (strain 8401) protein is Cell division protein FtsB.